Reading from the N-terminus, the 368-residue chain is Germination protease (368 aa).

Positions 1–16 (MKKSELDVNQYLIRTD) are excised as a propeptide.

Belongs to the peptidase A25 family. In terms of assembly, homotetramer. Autoproteolytically processed. The inactive tetrameric zymogen termed p46 autoprocesses to a smaller form termed p41, which is active only during spore germination.

The catalysed reaction is Endopeptidase action with P4 Glu or Asp, P1 preferably Glu &gt; Asp, P1' hydrophobic and P2' Ala.. In terms of biological role, initiates the degradation of small, acid-soluble proteins during spore germination. In Bacillus subtilis (strain 168), this protein is Germination protease (gpr).